Here is a 102-residue protein sequence, read N- to C-terminus: Integration host factor subunit alpha (102 aa).

A disordered region spans residues 49-71; sequence FGNFQLRTKPQRPGRNPKTGEEI.

The protein belongs to the bacterial histone-like protein family. In terms of assembly, heterodimer of an alpha and a beta chain.

Functionally, this protein is one of the two subunits of integration host factor, a specific DNA-binding protein that functions in genetic recombination as well as in transcriptional and translational control. The protein is Integration host factor subunit alpha of Nitrosomonas eutropha (strain DSM 101675 / C91 / Nm57).